The primary structure comprises 245 residues: ATP synthase subunit a, chloroplastic (245 aa).

5 consecutive transmembrane segments (helical) span residues 34-54, 93-113, 132-152, 197-217, and 218-238; these read TLMT…LSNL, VPFL…GALL, INTT…AGIS, LVIA…LMLL, and GLFT…AYIG.

It belongs to the ATPase A chain family. F-type ATPases have 2 components, CF(1) - the catalytic core - and CF(0) - the membrane proton channel. CF(1) has five subunits: alpha(3), beta(3), gamma(1), delta(1), epsilon(1). CF(0) has four main subunits: a, b, b' and c.

Its subcellular location is the plastid. The protein resides in the chloroplast thylakoid membrane. Its function is as follows. Key component of the proton channel; it plays a direct role in the translocation of protons across the membrane. The sequence is that of ATP synthase subunit a, chloroplastic from Bigelowiella natans (Pedinomonas minutissima).